The sequence spans 474 residues: tRNA-2-methylthio-N(6)-dimethylallyladenosine synthase (474 aa).

The MTTase N-terminal domain maps to K3 to G120. [4Fe-4S] cluster-binding residues include C12, C49, C83, C157, C161, and C164. The region spanning R143–E375 is the Radical SAM core domain. Residues R378 to R441 enclose the TRAM domain.

The protein belongs to the methylthiotransferase family. MiaB subfamily. Monomer. Requires [4Fe-4S] cluster as cofactor.

The protein resides in the cytoplasm. The enzyme catalyses N(6)-dimethylallyladenosine(37) in tRNA + (sulfur carrier)-SH + AH2 + 2 S-adenosyl-L-methionine = 2-methylsulfanyl-N(6)-dimethylallyladenosine(37) in tRNA + (sulfur carrier)-H + 5'-deoxyadenosine + L-methionine + A + S-adenosyl-L-homocysteine + 2 H(+). Catalyzes the methylthiolation of N6-(dimethylallyl)adenosine (i(6)A), leading to the formation of 2-methylthio-N6-(dimethylallyl)adenosine (ms(2)i(6)A) at position 37 in tRNAs that read codons beginning with uridine. This Yersinia enterocolitica serotype O:8 / biotype 1B (strain NCTC 13174 / 8081) protein is tRNA-2-methylthio-N(6)-dimethylallyladenosine synthase.